The chain runs to 418 residues: Alpha-tubulin N-acetyltransferase 1 (418 aa).

One can recognise an N-acetyltransferase domain in the interval 1-186 (MEFEFDVHKI…NNFVVFEGFF (186 aa)). Acetyl-CoA contacts are provided by residues 120–133 (FYIH…GFGK) and 156–165 (SEKFLSFLRK). Disordered regions lie at residues 237 to 292 (SSLG…MNLS) and 322 to 353 (QIKE…HQND). Positions 277-287 (QEDHSQRRRTS) are enriched in basic and acidic residues. The span at 329–353 (RTDSSAQEGRTQDRPNGSNSQHQND) shows a compositional bias: polar residues.

Belongs to the acetyltransferase ATAT1 family.

It is found in the cytoplasm. The protein localises to the membrane. Its subcellular location is the clathrin-coated pit. It localises to the cell junction. The protein resides in the focal adhesion. It is found in the cell projection. The protein localises to the axon. Its subcellular location is the cytoskeleton. It localises to the spindle. It catalyses the reaction L-lysyl-[alpha-tubulin] + acetyl-CoA = N(6)-acetyl-L-lysyl-[alpha-tubulin] + CoA + H(+). Functionally, specifically acetylates 'Lys-40' in alpha-tubulin on the lumenal side of microtubules. Promotes microtubule destabilization and accelerates microtubule dynamics; this activity may be independent of acetylation activity. Acetylates alpha-tubulin with a slow enzymatic rate, due to a catalytic site that is not optimized for acetyl transfer. Enters the microtubule through each end and diffuses quickly throughout the lumen of microtubules. Acetylates only long/old microtubules because of its slow acetylation rate since it does not have time to act on dynamically unstable microtubules before the enzyme is released. May be involved in neuron development. The sequence is that of Alpha-tubulin N-acetyltransferase 1 from Xenopus laevis (African clawed frog).